Reading from the N-terminus, the 91-residue chain is Alpha-elapitoxin-Oh2b (91 aa).

An N-terminal signal peptide occupies residues 1-21 (MKTLLLTLVVMTIVCLDLGYT). Disulfide bonds link Cys-24/Cys-41, Cys-34/Cys-62, Cys-47/Cys-51, Cys-66/Cys-77, and Cys-78/Cys-83.

This sequence belongs to the three-finger toxin family. Long-chain subfamily. Type II alpha-neurotoxin sub-subfamily. Monomer. Expressed by the venom gland.

The protein resides in the secreted. In terms of biological role, binds with high affinity to muscular (alpha-1/CHRNA1) and neuronal (alpha-7/CHRNA7) nicotinic acetylcholine receptor (nAChR) and inhibits acetylcholine from binding to the receptor, thereby impairing neuromuscular and neuronal transmission. Recombinant LNTX1 leads to a functional block of the muscle-type acetylcholine receptors. Has a cytotoxic activity. This neurotoxin is lethal. The chain is Alpha-elapitoxin-Oh2b from Ophiophagus hannah (King cobra).